We begin with the raw amino-acid sequence, 203 residues long: Small ribosomal subunit protein uS4 (203 aa).

In terms of domain architecture, S4 RNA-binding spans Arg93 to Val156.

This sequence belongs to the universal ribosomal protein uS4 family. As to quaternary structure, part of the 30S ribosomal subunit. Contacts protein S5. The interaction surface between S4 and S5 is involved in control of translational fidelity.

Its function is as follows. One of the primary rRNA binding proteins, it binds directly to 16S rRNA where it nucleates assembly of the body of the 30S subunit. With S5 and S12 plays an important role in translational accuracy. The sequence is that of Small ribosomal subunit protein uS4 from Streptococcus equi subsp. equi (strain 4047).